The following is a 78-amino-acid chain: Non-structural protein 7 (78 aa).

An N-terminal signal peptide occupies residues 1–23 (MLVFLHAVFITVLILLLIGRLQL). At 24–57 (LERLLLNHSFNLKTVNDFNILYRSLAETRLLKVV) the chain is on the lumenal side. A helical transmembrane segment spans residues 58–78 (LRVIFLVLLGFCCYRLLVTLM). The tract at residues 59 to 65 (RVIFLVL) is interaction with PPP1CC/PP1-gamma.

Belongs to the coronaviruses ns7/ns7a protein family. In terms of assembly, interacts with serine/threonine-protein phosphatase PPP1CC/PP1-gamma; this interaction; this interaction probably promotes EIF2S1/eIF-2alpha dephosphorylation.

It localises to the host membrane. Its function is as follows. Inhibits the integrated stress response (ISR) in the infected cell by promoting EIF2S1/eIF-2alpha dephosphorylation. Acts as a functional homolog of host PPP1R15A/GADD34 to recruit PP1 phosphatase and dephosphorylate host EIF2S1/eIF-2alpha. May function in the formation of membrane-bound replication complexes or in the assembly of the virus. The polypeptide is Non-structural protein 7 (Porcine transmissible gastroenteritis coronavirus (strain Purdue) (TGEV)).